A 173-amino-acid polypeptide reads, in one-letter code: Alpha-crystallin A chain (173 aa).

Met1 carries the N-acetylmethionine modification. Positions 52-162 constitute a sHSP domain; the sequence is LFRSVLESGI…SHSERPIPVS (111 aa). His100, Glu102, His107, and His154 together coordinate Zn(2+). The segment at 142 to 173 is disordered; sequence SGPKVPSNMDPSHSERPIPVSREEKPTSAPSS. Residues 153–167 show a composition bias toward basic and acidic residues; the sequence is SHSERPIPVSREEKP. Ser162 carries O-linked (GlcNAc) serine glycosylation.

Belongs to the small heat shock protein (HSP20) family. In terms of assembly, heteropolymer composed of three CRYAA and one CRYAB subunits. Inter-subunit bridging via zinc ions enhances stability, which is crucial as there is no protein turn over in the lens. Can also form homodimers and homotetramers (dimers of dimers) which serve as the building blocks of homooligomers. Within homooligomers, the zinc-binding motif is created from residues of 3 different molecules. His-100 and Glu-102 from one molecule are ligands of the zinc ion, and His-107 and His-154 residues from additional molecules complete the site with tetrahedral coordination geometry.

It is found in the cytoplasm. It localises to the nucleus. Contributes to the transparency and refractive index of the lens. May act as a chaperone, preventing aggregation of various proteins under a wide range of stress conditions. The chain is Alpha-crystallin A chain (CRYAA) from Gallus gallus (Chicken).